We begin with the raw amino-acid sequence, 359 residues long: Membrane-bound lytic murein transglycosylase C (359 aa).

The N-terminal stretch at 1 to 16 (MKKYLALALIAPLLIS) is a signal peptide. Cysteine 17 carries the N-palmitoyl cysteine lipid modification. Cysteine 17 is lipidated: S-diacylglycerol cysteine.

Belongs to the transglycosylase Slt family.

It localises to the cell outer membrane. The enzyme catalyses Exolytic cleavage of the (1-&gt;4)-beta-glycosidic linkage between N-acetylmuramic acid (MurNAc) and N-acetylglucosamine (GlcNAc) residues in peptidoglycan, from either the reducing or the non-reducing ends of the peptidoglycan chains, with concomitant formation of a 1,6-anhydrobond in the MurNAc residue.. Its function is as follows. Murein-degrading enzyme. May play a role in recycling of muropeptides during cell elongation and/or cell division. The chain is Membrane-bound lytic murein transglycosylase C from Shigella dysenteriae serotype 1 (strain Sd197).